Reading from the N-terminus, the 886-residue chain is Protein O-mannosyltransferase 1 (886 aa).

Composition is skewed to polar residues over residues 1-10 and 18-34; these read MSATYTNTIT and VRQQ…LSGE. Disordered stretches follow at residues 1–37 and 88–161; these read MSAT…ESNE and RGSV…KTAN. Residues 105-139 are compositionally biased toward low complexity; that stretch reads PTPVATPKQASPSPTSDRSRSLSRSPSPSRSRSLS. N-linked (GlcNAc...) asparagine glycans are attached at residues Asn-161 and Asn-242. The next 4 membrane-spanning stretches (helical) occupy residues 256-276, 310-330, 349-369, and 398-418; these read MPIF…APAV, VLME…LLRF, VCLG…GLAF, and LLIF…IHFK. 3 consecutive MIR domains span residues 450–511, 522–579, and 585–642; these read PLAV…VKRP, PDII…VEIL, and GDIW…VEEH. 3 consecutive transmembrane segments (helical) span residues 727 to 747, 791 to 811, and 835 to 855; these read ILLW…LAFY, LFLH…CFVV, and LMLI…IPFS.

The protein belongs to the glycosyltransferase 39 family. As to quaternary structure, interacts with tw/POMT2. In terms of tissue distribution, at the cellular blastoderm stage, expression accumulates in the ventrally located mesoderm primordium. At germ band extension, mesoderm expression is seen as stripes of strong expression. A very strong signal is also detected in the invaginating gut. As the germ band retracts, mesodermal expression decays and becomes restricted to somatic muscle precursors. After dorsal closure, expression has disappeared from the mesoderm and remains in the endoderm. Some expression is detected in a few cells of the head and the pharyngeal muscles.

It localises to the endoplasmic reticulum membrane. The catalysed reaction is a di-trans,poly-cis-dolichyl beta-D-mannosyl phosphate + L-seryl-[protein] = 3-O-(alpha-D-mannosyl)-L-seryl-[protein] + a di-trans,poly-cis-dolichyl phosphate + H(+). The enzyme catalyses a di-trans,poly-cis-dolichyl beta-D-mannosyl phosphate + L-threonyl-[protein] = 3-O-(alpha-D-mannosyl)-L-threonyl-[protein] + a di-trans,poly-cis-dolichyl phosphate + H(+). It participates in protein modification; protein glycosylation. In terms of biological role, rt/POMT1 and tw/POMT2 function as a protein O-mannosyltransferase in association with each other to generate and maintain normal muscle development. The protein is Protein O-mannosyltransferase 1 of Drosophila melanogaster (Fruit fly).